The sequence spans 230 residues: Cytochrome c oxidase subunit 2 (230 aa).

Residues 1 to 14 (MAHPTQLGFQDAAS) are Mitochondrial intermembrane-facing. A helical membrane pass occupies residues 15–45 (PVMEELLHFHDHALMIVFLISTLVLYIIIAM). Residues 46-59 (VSTKLTNKYILDSQ) are Mitochondrial matrix-facing. A helical transmembrane segment spans residues 60–87 (EIEIVWTILPAVILVLIALPSLRILYLM). Residues 88–230 (DEINDPHLTI…NWSSLMLEDA (143 aa)) lie on the Mitochondrial intermembrane side of the membrane. Residues H161, C196, E198, C200, H204, and M207 each contribute to the Cu cation site. E198 provides a ligand contact to Mg(2+).

The protein belongs to the cytochrome c oxidase subunit 2 family. As to quaternary structure, component of the cytochrome c oxidase (complex IV, CIV), a multisubunit enzyme composed of 14 subunits. The complex is composed of a catalytic core of 3 subunits MT-CO1, MT-CO2 and MT-CO3, encoded in the mitochondrial DNA, and 11 supernumerary subunits COX4I, COX5A, COX5B, COX6A, COX6B, COX6C, COX7A, COX7B, COX7C, COX8 and NDUFA4, which are encoded in the nuclear genome. The complex exists as a monomer or a dimer and forms supercomplexes (SCs) in the inner mitochondrial membrane with NADH-ubiquinone oxidoreductase (complex I, CI) and ubiquinol-cytochrome c oxidoreductase (cytochrome b-c1 complex, complex III, CIII), resulting in different assemblies (supercomplex SCI(1)III(2)IV(1) and megacomplex MCI(2)III(2)IV(2)). Found in a complex with TMEM177, COA6, COX18, COX20, SCO1 and SCO2. Interacts with TMEM177 in a COX20-dependent manner. Interacts with COX20. Interacts with COX16. It depends on Cu cation as a cofactor.

The protein resides in the mitochondrion inner membrane. It catalyses the reaction 4 Fe(II)-[cytochrome c] + O2 + 8 H(+)(in) = 4 Fe(III)-[cytochrome c] + 2 H2O + 4 H(+)(out). In terms of biological role, component of the cytochrome c oxidase, the last enzyme in the mitochondrial electron transport chain which drives oxidative phosphorylation. The respiratory chain contains 3 multisubunit complexes succinate dehydrogenase (complex II, CII), ubiquinol-cytochrome c oxidoreductase (cytochrome b-c1 complex, complex III, CIII) and cytochrome c oxidase (complex IV, CIV), that cooperate to transfer electrons derived from NADH and succinate to molecular oxygen, creating an electrochemical gradient over the inner membrane that drives transmembrane transport and the ATP synthase. Cytochrome c oxidase is the component of the respiratory chain that catalyzes the reduction of oxygen to water. Electrons originating from reduced cytochrome c in the intermembrane space (IMS) are transferred via the dinuclear copper A center (CU(A)) of subunit 2 and heme A of subunit 1 to the active site in subunit 1, a binuclear center (BNC) formed by heme A3 and copper B (CU(B)). The BNC reduces molecular oxygen to 2 water molecules using 4 electrons from cytochrome c in the IMS and 4 protons from the mitochondrial matrix. The sequence is that of Cytochrome c oxidase subunit 2 (mt-co2) from Carassius auratus (Goldfish).